Here is a 430-residue protein sequence, read N- to C-terminus: Ribosomal protein uS12 methylthiotransferase RimO (430 aa).

The MTTase N-terminal domain maps to 1-116 (MRVGIKVLGC…IANAIENGTD (116 aa)). [4Fe-4S] cluster-binding residues include Cys-10, Cys-46, Cys-79, Cys-148, Cys-152, and Cys-155. Positions 134–365 (LEERPYAYVK…LLQAEISNSR (232 aa)) constitute a Radical SAM core domain. The region spanning 367–430 (DRFVGKKLKF…DEYDMWGSVI (64 aa)) is the TRAM domain.

The protein belongs to the methylthiotransferase family. RimO subfamily. [4Fe-4S] cluster serves as cofactor.

It localises to the cytoplasm. It carries out the reaction L-aspartate(89)-[ribosomal protein uS12]-hydrogen + (sulfur carrier)-SH + AH2 + 2 S-adenosyl-L-methionine = 3-methylsulfanyl-L-aspartate(89)-[ribosomal protein uS12]-hydrogen + (sulfur carrier)-H + 5'-deoxyadenosine + L-methionine + A + S-adenosyl-L-homocysteine + 2 H(+). Its function is as follows. Catalyzes the methylthiolation of an aspartic acid residue of ribosomal protein uS12. This chain is Ribosomal protein uS12 methylthiotransferase RimO, found in Thermotoga petrophila (strain ATCC BAA-488 / DSM 13995 / JCM 10881 / RKU-1).